Here is a 100-residue protein sequence, read N- to C-terminus: Small ribosomal subunit protein uS14c (100 aa).

Belongs to the universal ribosomal protein uS14 family. As to quaternary structure, part of the 30S ribosomal subunit.

It localises to the plastid. Its subcellular location is the chloroplast. Its function is as follows. Binds 16S rRNA, required for the assembly of 30S particles. This Phaeodactylum tricornutum (strain CCAP 1055/1) protein is Small ribosomal subunit protein uS14c.